The following is a 332-amino-acid chain: Nuclear hormone receptor family member nhr-9 (332 aa).

The segment at residues 11–85 (ERRCAICSKL…MGMRIVTNQY (75 aa)) is a DNA-binding region (nuclear receptor). 2 NR C4-type zinc fingers span residues 14–34 (CAICSKLGNSYNYGVLSCNAC) and 50–73 (CINNDNCDTSNLILTCRQCRYNKC). In terms of domain architecture, NR LBD spans 101–332 (DRSNKLMNFQ…KRLCAELLGA (232 aa)).

It belongs to the nuclear hormone receptor family.

The protein resides in the nucleus. In terms of biological role, orphan nuclear receptor. The polypeptide is Nuclear hormone receptor family member nhr-9 (nhr-9) (Caenorhabditis elegans).